The primary structure comprises 469 residues: tRNA(Ile)-lysidine synthase (469 aa).

26-31 is a binding site for ATP; the sequence is SGGPDS.

The protein belongs to the tRNA(Ile)-lysidine synthase family.

Its subcellular location is the cytoplasm. The enzyme catalyses cytidine(34) in tRNA(Ile2) + L-lysine + ATP = lysidine(34) in tRNA(Ile2) + AMP + diphosphate + H(+). Functionally, ligates lysine onto the cytidine present at position 34 of the AUA codon-specific tRNA(Ile) that contains the anticodon CAU, in an ATP-dependent manner. Cytidine is converted to lysidine, thus changing the amino acid specificity of the tRNA from methionine to isoleucine. This is tRNA(Ile)-lysidine synthase from Shouchella clausii (strain KSM-K16) (Alkalihalobacillus clausii).